The chain runs to 397 residues: Succinate--CoA ligase [ADP-forming] subunit beta (397 aa).

Residues 9-254 (KALLRQYGAP…ETEEDPKELA (246 aa)) form the ATP-grasp domain. Residues Lys46, 53–55 (GRG), Glu109, Ser112, and Glu117 contribute to the ATP site. 2 residues coordinate Mg(2+): Asn209 and Asp223. Substrate-binding positions include Asn274 and 331–333 (GIM).

The protein belongs to the succinate/malate CoA ligase beta subunit family. Heterotetramer of two alpha and two beta subunits. Requires Mg(2+) as cofactor.

It catalyses the reaction succinate + ATP + CoA = succinyl-CoA + ADP + phosphate. It carries out the reaction GTP + succinate + CoA = succinyl-CoA + GDP + phosphate. Its pathway is carbohydrate metabolism; tricarboxylic acid cycle; succinate from succinyl-CoA (ligase route): step 1/1. In terms of biological role, succinyl-CoA synthetase functions in the citric acid cycle (TCA), coupling the hydrolysis of succinyl-CoA to the synthesis of either ATP or GTP and thus represents the only step of substrate-level phosphorylation in the TCA. The beta subunit provides nucleotide specificity of the enzyme and binds the substrate succinate, while the binding sites for coenzyme A and phosphate are found in the alpha subunit. In Paracoccus denitrificans (strain Pd 1222), this protein is Succinate--CoA ligase [ADP-forming] subunit beta.